We begin with the raw amino-acid sequence, 186 residues long: ADP-ribosylation factor-like protein 6 (186 aa).

The N-myristoyl glycine moiety is linked to residue glycine 2. Residues 24 to 31 (GLDNSGKT), threonine 50, 69 to 73 (DMSGQ), glycine 72, 130 to 133 (NKMD), and alanine 164 each bind GTP. Threonine 50 is a binding site for Mg(2+).

This sequence belongs to the small GTPase superfamily. Arf family. As to quaternary structure, interacts with SEC61B, ARL6IP1, ARL6IP2, ARL6IP3, ARL6IP4 ARL6IP5 and ARL6IP6. Interacts (GTP-bound form) with the BBSome a complex that contains BBS1, BBS2, BBS4, BBS5, BBS7, BBS8/TTC8, BBS9 and BBIP10. Interacts (GTP-free form) with IFT27. Most abundant in brain and kidney. Expressed in heart and eye. Isoform 2 is expressed only in the retina.

Its subcellular location is the cell projection. It localises to the cilium membrane. It is found in the cytoplasm. The protein resides in the cytoskeleton. The protein localises to the cilium axoneme. Its subcellular location is the cilium basal body. Its function is as follows. Involved in membrane protein trafficking at the base of the ciliary organelle. Mediates recruitment onto plasma membrane of the BBSome complex which would constitute a coat complex required for sorting of specific membrane proteins to the primary cilia. Together with BBS1, is necessary for correct trafficking of PKD1 to primary cilia. Together with the BBSome complex and LTZL1, controls SMO ciliary trafficking and contributes to the sonic hedgehog (SHH) pathway regulation. May regulate cilia assembly and disassembly and subsequent ciliary signaling events such as the Wnt signaling cascade. Isoform 2 may be required for proper retinal function and organization. This is ADP-ribosylation factor-like protein 6 (Arl6) from Mus musculus (Mouse).